Here is a 747-residue protein sequence, read N- to C-terminus: DNA repair and recombination protein RAD54-like (747 aa).

The tract at residues methionine 1 to glutamine 42 is disordered. A required for chromatin remodeling, strand pairing activities and coupling of ATPase activity region spans residues arginine 2–glutamine 9. Residue serine 38 is modified to Phosphoserine. In terms of domain architecture, Helicase ATP-binding spans serine 170–glycine 345. ATP is bound at residue aspartate 183–threonine 190. The short motif at aspartate 296–histidine 299 is the DEGH box element. The 154-residue stretch at valine 500–glutamate 653 folds into the Helicase C-terminal domain. Lysine 515 is modified (N6-acetyllysine). At serine 572 the chain carries Phosphoserine; by NEK1.

This sequence belongs to the SNF2/RAD54 helicase family. As to quaternary structure, homohexamer. Interacts (via N-terminus) with RAD51. Interacts with NAP1L1. Interacts with BRD9; this interaction orchestrates RAD51-RAD54 complex formation. In terms of processing, acetylated. Acetylation promotes interaction with BRD9, and subsequently with RAD54, which is essential for homologous recombination (HR). Phosphorylated. Phosphorylation at Ser-572 by NEK1 specifically in G2 phase allows efficient removal of RAD51 filaments from DNA. Hardly detectable in most tissues. Dramatically increased in thymus, spleen and testis.

Its subcellular location is the nucleus. The catalysed reaction is ATP + H2O = ADP + phosphate + H(+). Plays an essential role in homologous recombination (HR) which is a major pathway for repairing DNA double-strand breaks (DSBs), single-stranded DNA (ssDNA) gaps, and stalled or collapsed replication forks. Acts as a molecular motor during the homology search and guides RAD51 ssDNA along a donor dsDNA thereby changing the homology search from the diffusion-based mechanism to a motor-guided mechanism. Plays also an essential role in RAD51-mediated synaptic complex formation which consists of three strands encased in a protein filament formed once homology is recognized. Once DNA strand exchange occured, dissociates RAD51 from nucleoprotein filaments formed on dsDNA. Deficiency also resulted in an increased frequency of end-to-end chromosome fusions involving telomeres compared to the controls, suggesting a putative role in telomere capping. Non-homologous end joining (NHEJ) and homologous recombination (HR) represent the two major pathways of DNA double-strand break (DSB) repair in eukaryotic cells. LIG4 and RAD54L cooperate to support cellular proliferation, repair spontaneous DSBs, and prevent chromosome and single chromatid aberrations. The protein is DNA repair and recombination protein RAD54-like (Rad54l) of Mus musculus (Mouse).